Here is a 294-residue protein sequence, read N- to C-terminus: 4-hydroxy-tetrahydrodipicolinate synthase (294 aa).

Residue threonine 47 coordinates pyruvate. The active-site Proton donor/acceptor is the tyrosine 136. The active-site Schiff-base intermediate with substrate is the lysine 164. Valine 206 contributes to the pyruvate binding site.

The protein belongs to the DapA family. As to quaternary structure, homotetramer; dimer of dimers.

Its subcellular location is the cytoplasm. It catalyses the reaction L-aspartate 4-semialdehyde + pyruvate = (2S,4S)-4-hydroxy-2,3,4,5-tetrahydrodipicolinate + H2O + H(+). Its pathway is amino-acid biosynthesis; L-lysine biosynthesis via DAP pathway; (S)-tetrahydrodipicolinate from L-aspartate: step 3/4. In terms of biological role, catalyzes the condensation of (S)-aspartate-beta-semialdehyde [(S)-ASA] and pyruvate to 4-hydroxy-tetrahydrodipicolinate (HTPA). The polypeptide is 4-hydroxy-tetrahydrodipicolinate synthase (Nostoc punctiforme (strain ATCC 29133 / PCC 73102)).